Consider the following 202-residue polypeptide: Na(+)-translocating NADH-quinone reductase subunit E (202 aa).

6 consecutive transmembrane segments (helical) span residues 11–31, 35–55, 81–101, 114–134, 144–164, and 180–200; these read AVFV…FIAI, VETA…TVPA, FLGL…LEML, GVFL…LFMV, TVYG…LAGI, and LGIT…FSGV.

This sequence belongs to the NqrDE/RnfAE family. In terms of assembly, composed of six subunits; NqrA, NqrB, NqrC, NqrD, NqrE and NqrF.

Its subcellular location is the cell inner membrane. The catalysed reaction is a ubiquinone + n Na(+)(in) + NADH + H(+) = a ubiquinol + n Na(+)(out) + NAD(+). Its function is as follows. NQR complex catalyzes the reduction of ubiquinone-1 to ubiquinol by two successive reactions, coupled with the transport of Na(+) ions from the cytoplasm to the periplasm. NqrA to NqrE are probably involved in the second step, the conversion of ubisemiquinone to ubiquinol. This Pseudomonas aeruginosa (strain LESB58) protein is Na(+)-translocating NADH-quinone reductase subunit E.